Here is a 505-residue protein sequence, read N- to C-terminus: Flagellin (505 aa).

This sequence belongs to the bacterial flagellin family.

Its subcellular location is the secreted. The protein resides in the bacterial flagellum. Functionally, flagellin is the subunit protein which polymerizes to form the filaments of bacterial flagella. This Salmonella derby protein is Flagellin (fliC).